The sequence spans 145 residues: uncharacterized protein (145 aa).

N-acetylmethionine is present on Met-1. Positions 15–41 are disordered; it reads QLKNNSGGTNGDRNSGANNGGGENSAP. A compositionally biased stretch (polar residues) spans 16 to 27; the sequence is LKNNSGGTNGDR. Residues Ser-121 and Ser-126 each carry the phosphoserine modification. The segment at 125–145 is disordered; it reads NSFDKQNAKNDDDEDDDDFFD. Acidic residues predominate over residues 135–145; sequence DDDEDDDDFFD.

This sequence belongs to the PDCD5 family.

This is an uncharacterized protein from Saccharomyces cerevisiae (strain ATCC 204508 / S288c) (Baker's yeast).